A 904-amino-acid chain; its full sequence is Translation initiation factor IF-2 (904 aa).

Disordered stretches follow at residues 103–122 (YVKSENEGSGRAAPMTPDEE), 137–252 (NLEE…MVAG), and 267–315 (HLSA…FERP). The segment covering 137-177 (NLEEQQRLAESDRVRDEAIQRKREEEQAAKDRAEAERKAAE) has biased composition (basic and acidic residues). Low complexity-rich tracts occupy residues 178–230 (EAAA…AAPA) and 280–293 (RGKPTGRPGSSSSR). The 170-residue stretch at 403 to 572 (SRPPVVTIMG…SLQAEVLELK (170 aa)) folds into the tr-type G domain. A G1 region spans residues 412–419 (GHVDHGKT). A GTP-binding site is contributed by 412–419 (GHVDHGKT). The segment at 437 to 441 (GITQH) is G2. The tract at residues 458 to 461 (DTPG) is G3. GTP is bound by residues 458–462 (DTPGH) and 512–515 (NKID). Positions 512 to 515 (NKID) are G4. Residues 548 to 550 (SAK) form a G5 region.

It belongs to the TRAFAC class translation factor GTPase superfamily. Classic translation factor GTPase family. IF-2 subfamily.

It localises to the cytoplasm. Its function is as follows. One of the essential components for the initiation of protein synthesis. Protects formylmethionyl-tRNA from spontaneous hydrolysis and promotes its binding to the 30S ribosomal subunits. Also involved in the hydrolysis of GTP during the formation of the 70S ribosomal complex. This chain is Translation initiation factor IF-2, found in Xanthomonas euvesicatoria pv. vesicatoria (strain 85-10) (Xanthomonas campestris pv. vesicatoria).